The primary structure comprises 310 residues: Ribosomal RNA small subunit methyltransferase H (310 aa).

S-adenosyl-L-methionine-binding positions include 33 to 35, aspartate 53, tyrosine 83, aspartate 100, and glutamine 107; that span reads AGH.

The protein belongs to the methyltransferase superfamily. RsmH family.

The protein resides in the cytoplasm. It catalyses the reaction cytidine(1402) in 16S rRNA + S-adenosyl-L-methionine = N(4)-methylcytidine(1402) in 16S rRNA + S-adenosyl-L-homocysteine + H(+). In terms of biological role, specifically methylates the N4 position of cytidine in position 1402 (C1402) of 16S rRNA. This Clostridium perfringens (strain ATCC 13124 / DSM 756 / JCM 1290 / NCIMB 6125 / NCTC 8237 / Type A) protein is Ribosomal RNA small subunit methyltransferase H.